The sequence spans 1527 residues: Lysophospholipase nte1 (1527 aa).

The Cytoplasmic portion of the chain corresponds to 1–69; the sequence is MADDGGPFPL…PPPAPSTMVG (69 aa). The helical transmembrane segment at 70–90 threads the bilayer; the sequence is WIGWVFSFVFQVIPSILYWAI. Residues 91-112 are Lumenal-facing; it reads TFCTITLPTWLFTLFSMSLTFT. A helical transmembrane segment spans residues 113 to 133; the sequence is MNFTTLLLIALAIVSTVSWFI. The Cytoplasmic portion of the chain corresponds to 134-1527; it reads RYRFLNMYSR…RTLAPRRASI (1394 aa). 4 disordered regions span residues 240 to 259, 299 to 387, 576 to 596, and 750 to 785; these read ADHE…GQNV, LSSS…HPDI, EKEQ…PFHR, and AHGE…RRQS. The span at 355-373 shows a compositional bias: basic and acidic residues; the sequence is HLEESRGTPDHDHQPESRT. Residues 685–804 and 846–966 contribute to the a nucleoside 3',5'-cyclic phosphate site; these read GGTS…VGSV and RLTS…IAQR. Low complexity predominate over residues 761–771; sequence RTTTASSRTSS. Residues 1224–1388 enclose the PNPLA domain; it reads LVLGGGGARG…IDNLTVPHMK (165 aa). A GXGXXG motif is present at residues 1228–1233; sequence GGGARG. The short motif at 1255–1259 is the GXSXG element; sequence GTSIG. S1257 acts as the Nucleophile in catalysis. The active-site Proton acceptor is the D1375. The short motif at 1375–1377 is the DGA/G element; the sequence is DGG.

The protein belongs to the NTE family.

It localises to the endoplasmic reticulum membrane. The catalysed reaction is a 1-acyl-sn-glycero-3-phosphocholine + H2O = sn-glycerol 3-phosphocholine + a fatty acid + H(+). Inhibited by organophosphorus esters. In terms of biological role, intracellular phospholipase B that catalyzes the double deacylation of phosphatidylcholine (PC) to glycerophosphocholine (GroPCho). Plays an important role in membrane lipid homeostasis. Responsible for the rapid PC turnover in response to inositol, elevated temperatures, or when choline is present in the growth medium. The sequence is that of Lysophospholipase nte1 (nte1) from Aspergillus terreus (strain NIH 2624 / FGSC A1156).